Consider the following 185-residue polypeptide: UPF0669 protein C6orf120 homolog (185 aa).

Positions 1-23 are cleaved as a signal peptide; it reads MATPWRCALLMILASQVVILVKC. N-linked (GlcNAc...) asparagine glycosylation is present at Asn47.

Belongs to the UPF0669 family.

It is found in the secreted. Its function is as follows. May be involved in induction of apoptosis in CD4(+) T-cells, but not CD8(+) T-cells or hepatocytes. This Rattus norvegicus (Rat) protein is UPF0669 protein C6orf120 homolog.